Here is a 419-residue protein sequence, read N- to C-terminus: Carboxypeptidase A1 (419 aa).

The signal sequence occupies residues 1–16 (MKRLLVLSVLLAAVFG). A propeptide spans 17 to 110 (NENFVGHQVL…KQQMSAFQAR (94 aa)) (activation peptide). A Peptidase M14 domain is found at 121-414 (TYHTLDEIYE…LALLTIMDHT (294 aa)). Positions 179 and 182 each coordinate Zn(2+). Residues 179-182 (HSRE), Arg237, and 254-255 (NR) each bind substrate. A disulfide bridge connects residues Cys248 and Cys271. His306 lines the Zn(2+) pocket. Residues 307–308 (SY) and Tyr358 each bind substrate. Glu380 functions as the Proton donor/acceptor in the catalytic mechanism.

This sequence belongs to the peptidase M14 family. Monomer. Zn(2+) serves as cofactor.

Its subcellular location is the secreted. The enzyme catalyses Release of a C-terminal amino acid, but little or no action with -Asp, -Glu, -Arg, -Lys or -Pro.. Carboxypeptidase that catalyzes the release of a C-terminal amino acid, but has little or no action with -Asp, -Glu, -Arg, -Lys or -Pro. This chain is Carboxypeptidase A1 (Cpa1), found in Mus musculus (Mouse).